We begin with the raw amino-acid sequence, 224 residues long: 7-cyano-7-deazaguanine synthase (224 aa).

Residue leucine 10 to valine 20 coordinates ATP. The Zn(2+) site is built by cysteine 189, cysteine 199, cysteine 202, and cysteine 205.

This sequence belongs to the QueC family. Requires Zn(2+) as cofactor.

The enzyme catalyses 7-carboxy-7-deazaguanine + NH4(+) + ATP = 7-cyano-7-deazaguanine + ADP + phosphate + H2O + H(+). It functions in the pathway purine metabolism; 7-cyano-7-deazaguanine biosynthesis. Its function is as follows. Catalyzes the ATP-dependent conversion of 7-carboxy-7-deazaguanine (CDG) to 7-cyano-7-deazaguanine (preQ(0)). The chain is 7-cyano-7-deazaguanine synthase from Ectopseudomonas mendocina (strain ymp) (Pseudomonas mendocina).